Reading from the N-terminus, the 90-residue chain is MEANSRVMVRVLLLALVVQVTLSQHWSYGWLPGGKRSVGELEATIRMMGTGEVVSLPEEASAQTQERLRPYNVINDDSSHFDRKKRSPNK.

The N-terminal stretch at Met1–Ser23 is a signal peptide. A Pyrrolidone carboxylic acid modification is found at Gln24. Residue Gly33 is modified to Glycine amide. Residues Leu56–Lys90 form a disordered region.

This sequence belongs to the GnRH family.

It localises to the secreted. Its function is as follows. Stimulates the secretion of gonadotropins. This is Progonadoliberin-3 (gnrh3) from Dicentrarchus labrax (European seabass).